The primary structure comprises 366 residues: Glutamate 5-kinase (366 aa).

Position 17 (Lys17) interacts with ATP. The substrate site is built by Ser57, Asp144, and Asn156. ATP contacts are provided by residues 176 to 177 (SD) and 216 to 222 (TGGMASK). The 75-residue stretch at 278 to 352 (QGILHIDEGA…GKSTQELPAE (75 aa)) folds into the PUA domain.

The protein belongs to the glutamate 5-kinase family.

The protein resides in the cytoplasm. It carries out the reaction L-glutamate + ATP = L-glutamyl 5-phosphate + ADP. It functions in the pathway amino-acid biosynthesis; L-proline biosynthesis; L-glutamate 5-semialdehyde from L-glutamate: step 1/2. Catalyzes the transfer of a phosphate group to glutamate to form L-glutamate 5-phosphate. The sequence is that of Glutamate 5-kinase from Rhodococcus jostii (strain RHA1).